Consider the following 43-residue polypeptide: Potassium channel toxin gamma-KTx 4.2 (43 aa).

Cystine bridges form between Cys-5–Cys-23, Cys-11–Cys-34, Cys-20–Cys-39, and Cys-24–Cys-41.

It belongs to the ergtoxin family. Gamma-KTx 4 subfamily. As to expression, expressed by the venom gland.

The protein localises to the secreted. Reversibly blocks Kv11/ERG potassium channels. The protein is Potassium channel toxin gamma-KTx 4.2 of Centruroides noxius (Mexican scorpion).